Here is a 188-residue protein sequence, read N- to C-terminus: Large ribosomal subunit protein uL5 (188 aa).

Belongs to the universal ribosomal protein uL5 family. As to quaternary structure, part of the 50S ribosomal subunit; part of the 5S rRNA/L5/L18/L25 subcomplex. Contacts the 5S rRNA and the P site tRNA. Forms a bridge to the 30S subunit in the 70S ribosome.

In terms of biological role, this is one of the proteins that bind and probably mediate the attachment of the 5S RNA into the large ribosomal subunit, where it forms part of the central protuberance. In the 70S ribosome it contacts protein S13 of the 30S subunit (bridge B1b), connecting the 2 subunits; this bridge is implicated in subunit movement. Contacts the P site tRNA; the 5S rRNA and some of its associated proteins might help stabilize positioning of ribosome-bound tRNAs. This Aquifex pyrophilus protein is Large ribosomal subunit protein uL5.